A 1087-amino-acid chain; its full sequence is Synaptopodin-2 (1087 aa).

One can recognise a PDZ domain in the interval 6-88; the sequence is FICISMTGGA…SLHLLVKRPS (83 aa). Disordered regions lie at residues 24–52, 88–112, and 207–272; these read GKEE…EGDE, SSGT…HEGP, and GPIV…AGLP. Basic and acidic residues predominate over residues 101–112; it reads TTNHQHLTHEGP. Composition is skewed to polar residues over residues 207 to 230 and 246 to 255; these read GPIV…SQLE and TSLTSSTSSG. Phosphoserine occurs at positions 300, 319, and 320. A disordered region spans residues 320–359; the sequence is SEGTEHGEDQRSGKDQSRPHKHRARHARLRRSESLSEKQV. A compositionally biased stretch (basic and acidic residues) spans 322 to 337; that stretch reads GTEHGEDQRSGKDQSR. At threonine 323 the chain carries Phosphothreonine. The span at 338 to 348 shows a compositional bias: basic residues; sequence PHKHRARHARL. Over residues 349–359 the composition is skewed to basic and acidic residues; the sequence is RRSESLSEKQV. Positions 388 to 396 match the Nuclear localization signal motif; that stretch reads KKRRRRARK. Serine 540, serine 541, serine 543, and serine 546 each carry phosphoserine. The interaction with YWHAB stretch occupies residues 551–557; it reads RSLASVP. At serine 555 the chain carries Phosphoserine; by PKA. Disordered regions lie at residues 581–817 and 832–863; these read AKPF…ALNL and NYTP…GMSG. Phosphoserine is present on serine 596. Residues 599-804 form an interaction with YWHAB region; sequence RSVTSPISDF…AVSSIKIAQP (206 aa). Threonine 602 is subject to Phosphothreonine; by PKA and CaMK2. Phosphoserine is present on serine 603. Pro residues-rich tracts occupy residues 609-622 and 636-647; these read PAPP…PPPE and AQPPPWPQPAPW. Positions 611–614 match the PPPY motif motif; sequence PPPY. A Phosphotyrosine modification is found at tyrosine 614. Phosphoserine is present on serine 618. Residues 656-796 form an F-actin binding region; that stretch reads SEQIASRDER…PPNPPQVTAV (141 aa). The segment at 656–909 is F-actin bundling activity; sequence SEQIASRDER…LPASWKYSSN (254 aa). 2 interaction with ACTN2 regions span residues 656 to 917 and 894 to 1087; these read SEQI…PPVA and QSPT…VVEE. 2 positions are modified to phosphoserine: serine 697 and serine 719. Positions 740-893 are actin binding; sequence AKQKTPPPVA…DTVQAHTVRA (154 aa). A Phosphothreonine modification is found at threonine 744. Low complexity predominate over residues 751-777; it reads KPAVKSPSSSQPVAPVSPVWSPGVAPA. Serine 767 and serine 771 each carry phosphoserine. Positions 781–797 are enriched in polar residues; that stretch reads AFSTSNPPNPPQVTAVS. The interval 803 to 1087 is interaction with FLNC; that stretch reads QPAAPPARPA…QVWKPSVVEE (285 aa). A phosphoserine mark is found at serine 895, serine 899, and serine 903. 3 disordered regions span residues 930-952, 970-1012, and 1037-1060; these read AIKS…KKPL, FTFQ…PTNA, and PVSA…STSY. The interval 993–1012 is interaction with ZYX; it reads PAMKQALPPRQANVGSPTNA. 2 positions are modified to phosphoserine: serine 1008 and serine 1050. The segment covering 1037–1051 has biased composition (low complexity); the sequence is PVSASPVPVSVPTSP.

Belongs to the synaptopodin family. In terms of assembly, may self-associate in muscle cells under oxidative stress. Binds F-actin. Interacts with ACTN2; ACTN2 is proposed to anchor SYOP2 at Z lines in mature myocytes. Interacts with AKAP6, PPP3CA and CAMK2A. Interacts (phosphorylated form) with YWHAB; YWHAB competes with ACTN2 for interaction with SYNPO2. Interacts with KPNA2; mediating nuclear import of SYNOP2; dependent on interaction with YWHAB. Interacts with IPO13; may be implicated in SYNOP2 nuclear import. Interacts with ZYX, FLNC, ILK. Interacts with BAG3 (via WW 1 domain). May associate with the CASA complex consisting of HSPA8, HSPB8 and BAG3. Interacts with VPS18. Post-translationally, phosphorylated by PKA, and by CaMK2 at multiple sites. Dephosphorylated by calcineurin at Ser-555 and Thr-602; abrogating interaction with YWHAB and impairing nuclear import. As to expression, expressed in skeletal muscle, heart, colon, stomach, uterus and lung. Expression is restricted to muscle cell layers in colon, uterus and stomach.

It is found in the nucleus. It localises to the cytoplasm. The protein resides in the myofibril. The protein localises to the sarcomere. Its subcellular location is the z line. It is found in the cell junction. It localises to the focal adhesion. Its function is as follows. Has an actin-binding and actin-bundling activity. Can induce the formation of F-actin networks. At the sarcomeric Z lines is proposed to act as adapter protein that links nascent myofibers to the sarcolemma via ZYX and may play a role in early assembly and stabilization of the Z lines. Involved in autophagosome formation. May play a role in chaperone-assisted selective autophagy (CASA) involved in Z lines maintenance in striated muscle under mechanical tension; may link the client-processing CASA chaperone machinery to a membrane-tethering and fusion complex providing autophagosome membranes. Involved in regulation of cell migration. May be a tumor suppressor. This is Synaptopodin-2 (Synpo2) from Mus musculus (Mouse).